We begin with the raw amino-acid sequence, 287 residues long: Nucleotide-binding protein GM21_3387 (287 aa).

8 to 15 (GLSGSGKS) lines the ATP pocket. GTP is bound at residue 59 to 62 (DIRS).

It belongs to the RapZ-like family.

Its function is as follows. Displays ATPase and GTPase activities. In Geobacter sp. (strain M21), this protein is Nucleotide-binding protein GM21_3387.